The primary structure comprises 280 residues: Bifunctional protein FolD (280 aa).

Residues 166 to 168 (GRS) and serine 191 contribute to the NADP(+) site.

This sequence belongs to the tetrahydrofolate dehydrogenase/cyclohydrolase family. In terms of assembly, homodimer.

The enzyme catalyses (6R)-5,10-methylene-5,6,7,8-tetrahydrofolate + NADP(+) = (6R)-5,10-methenyltetrahydrofolate + NADPH. The catalysed reaction is (6R)-5,10-methenyltetrahydrofolate + H2O = (6R)-10-formyltetrahydrofolate + H(+). It functions in the pathway one-carbon metabolism; tetrahydrofolate interconversion. Functionally, catalyzes the oxidation of 5,10-methylenetetrahydrofolate to 5,10-methenyltetrahydrofolate and then the hydrolysis of 5,10-methenyltetrahydrofolate to 10-formyltetrahydrofolate. This chain is Bifunctional protein FolD, found in Teredinibacter turnerae (strain ATCC 39867 / T7901).